The sequence spans 118 residues: ATP synthase subunit gamma, chloroplastic (118 aa).

An intrachain disulfide couples C30 to C36.

The protein belongs to the ATPase gamma chain family. In terms of assembly, F-type ATPases have 2 components, CF(1) - the catalytic core - and CF(0) - the membrane proton channel. CF(1) has five subunits: alpha(3), beta(3), gamma(1), delta(1), epsilon(1). CF(0) has four main subunits: a, b, b' and c.

It is found in the plastid. Its subcellular location is the chloroplast thylakoid membrane. Produces ATP from ADP in the presence of a proton gradient across the membrane. The gamma chain is believed to be important in regulating ATPase activity and the flow of protons through the CF(0) complex. Functionally, inceptin is a proteolytic fragment produced by insect larvae that previously ingested the protein. This peptide mediate plant perception of herbivory through the induction of volatile, phenylpropanoid and protease inhibitor defenses such as ethylene, jasmonic acid and salicylic acid for example. In Vigna unguiculata (Cowpea), this protein is ATP synthase subunit gamma, chloroplastic.